A 467-amino-acid chain; its full sequence is Metal transporter cnnm-4 (467 aa).

Topologically, residues 1–110 (MELYAAGRYD…EIPEGKDKTR (110 aa)) are extracellular. Residue asparagine 61 is glycosylated (N-linked (GlcNAc...) asparagine). Residues 107 to 293 (DKTRVYFMMP…LEDEEAADGN (187 aa)) enclose the CNNM transmembrane domain. A helical transmembrane segment spans residues 111–131 (VYFMMPLLVLCLGLSATFSGL). Residues 132–170 (NLAIMSFSINDLKLIQESDSDKLMKQRAMDVMRLRRNSN) lie on the Cytoplasmic side of the membrane. A helical membrane pass occupies residues 171 to 191 (FVLVTIIFGNCFCNISITLLM). The Extracellular portion of the chain corresponds to 192–196 (NYFAE). A helical membrane pass occupies residues 197 to 217 (FYGFGGFIFVELISTALLLIF). Residues 218–238 (TEILPSLIFTKNALAIASRLQ) lie on the Cytoplasmic side of the membrane. The helical transmembrane segment at 239 to 259 (YFVIFTMCITSPISYPLAMLL) threads the bilayer. Over 260-467 (NIILGKENAD…IFDEKDARQE (208 aa)) the chain is Extracellular. CBS domains are found at residues 317-381 (MTEI…GSDT) and 394-461 (KRRK…IFDE). N-linked (GlcNAc...) asparagine glycosylation occurs at asparagine 364.

Belongs to the ACDP family.

The protein resides in the cell membrane. Functionally, probable metal transporter. Probably acts redundantly with the other metal transport proteins cnnm-1, cnnm-2, cnnm-3 and cnnm-5 to regulate Mg(2+) homeostasis. The sequence is that of Metal transporter cnnm-4 from Caenorhabditis elegans.